Here is a 74-residue protein sequence, read N- to C-terminus: Male-specific sperm protein Mst84Db (74 aa).

This sequence belongs to the MST(3)CGP family. In terms of tissue distribution, testis.

The sequence is that of Male-specific sperm protein Mst84Db (Mst84Db) from Drosophila melanogaster (Fruit fly).